Here is a 78-residue protein sequence, read N- to C-terminus: NAD(P)H-quinone oxidoreductase subunit O (78 aa).

This sequence belongs to the complex I NdhO subunit family. In terms of assembly, NDH-1 can be composed of about 15 different subunits; different subcomplexes with different compositions have been identified which probably have different functions.

It localises to the cellular thylakoid membrane. The enzyme catalyses a plastoquinone + NADH + (n+1) H(+)(in) = a plastoquinol + NAD(+) + n H(+)(out). It catalyses the reaction a plastoquinone + NADPH + (n+1) H(+)(in) = a plastoquinol + NADP(+) + n H(+)(out). NDH-1 shuttles electrons from an unknown electron donor, via FMN and iron-sulfur (Fe-S) centers, to quinones in the respiratory and/or the photosynthetic chain. The immediate electron acceptor for the enzyme in this species is believed to be plastoquinone. Couples the redox reaction to proton translocation, and thus conserves the redox energy in a proton gradient. Cyanobacterial NDH-1 also plays a role in inorganic carbon-concentration. The chain is NAD(P)H-quinone oxidoreductase subunit O from Prochlorococcus marinus (strain MIT 9312).